A 738-amino-acid polypeptide reads, in one-letter code: Squalene hopane cyclase afumA (738 aa).

PFTB repeat units follow at residues 132-173 (GSQY…RIIG) and 321-361 (RRRC…KLHD). Asp-460 (proton donor) is an active-site residue. 3 PFTB repeats span residues 482–523 (VRDA…ESLC), 581–621 (CARA…QYFK), and 634–675 (AARA…SQTA).

This sequence belongs to the terpene cyclase/mutase family.

The protein operates within secondary metabolite biosynthesis. Squalene hopane cyclase; part of the gene cluster that mediates the biosynthesis fumihopaside A, a hopane-type glucoside that enhances the thermotolerance and UV resistance of N.fumigata. The first step of fumihopaside A biosynthesis is performed by the squalene hopane cyclase afumA that catalyzes the cyclization of 3S-oxidosqualene into the hopene 21-beta-H-hopane-3-beta,22-diol. The cytochrome P450 monooxygenase afumB is responsible for both hydroxylation at C-24 and oxidations at C-30 of the afumA product. The glycosyltransferase afumC then catalyzes the glycosylation at C-24, using UDP-D-glucose as a donor, to produce fumihopaside A. AfumC is also able to accept UDP-D-galactose and UDP-D-glucuronic acid as donors to yield minor derivatives. Fumihopaside B, another minor derivative produced, is different from fumihopaside A due to the presence of a double bond between C-22 and C-29. The polypeptide is Squalene hopane cyclase afumA (Aspergillus fumigatus (strain CBS 144.89 / FGSC A1163 / CEA10) (Neosartorya fumigata)).